We begin with the raw amino-acid sequence, 210 residues long: Glycerol-3-phosphate acyltransferase (210 aa).

The next 6 membrane-spanning stretches (helical) occupy residues 8–28 (LILL…LLLT), 56–76 (GLAA…VLIA), 87–107 (TMAV…WLGF), 119–139 (TIWV…LLVA), 144–164 (ISSA…VLLS), and 165–185 (GRPL…LIWA).

It belongs to the PlsY family. Probably interacts with PlsX.

The protein localises to the cell inner membrane. It catalyses the reaction an acyl phosphate + sn-glycerol 3-phosphate = a 1-acyl-sn-glycero-3-phosphate + phosphate. Its pathway is lipid metabolism; phospholipid metabolism. Its function is as follows. Catalyzes the transfer of an acyl group from acyl-phosphate (acyl-PO(4)) to glycerol-3-phosphate (G3P) to form lysophosphatidic acid (LPA). This enzyme utilizes acyl-phosphate as fatty acyl donor, but not acyl-CoA or acyl-ACP. The chain is Glycerol-3-phosphate acyltransferase from Gluconobacter oxydans (strain 621H) (Gluconobacter suboxydans).